The sequence spans 956 residues: MGTGAADGSRGARRWLPWLGLFFWAAGAAAARGADGSEILPDSIPSAPGTLPHFIEEPEDAYIIKSNPIALRCKARPAMQIFFKCNGEWVHQNEHVSEESLDESSGLKVREVFINVTRQQVEDFHGPEDYWCQCVAWSHLGTSKSRKASVRIAYLRKNFEQDPQGREVPIEGMIVLHCRPPEGVPAAEVEWLKNEEPIDSEQDENIDTRADHNLIIRQARLSDSGNYTCMAANIVAKRRSLSATVVVYVNGGWSSWTEWSACNVRCGRGWQKRSRTCTNPAPLNGGAFCEGMSVQKITCTALCPVDGSWEVWSEWSVCSPECEHLRIRECTAPPPRNGGKFCEGLSQESENCTDGLCILDKKPLHEIKPQRWSRRGIENASDIALYSGLGAAVVAVAVLVIGVTLYRRSHSDYGVDVIDSSALTGGFQTFNFKTVRQGNSLLLNPAMQPDLTVSRTYSGPICLQDPLDKELMTESSLFNPLSDIKVKVQSSFMVSLGVSERAEYHGKNHSGTFPHGNNRGFSTIHPRNKTPYIQNLSSLPTRTELRTTGVFGHLGGRLVMPNTGVSLLIPHGAIPEENSWEIYMSINQGEPSLQSDGSEVLLSPEVTCGPPDMLVTTPFALTIPHCADVSSEHWNIHLKKRTQQGKWEEVMSVEDESTSCYCLLDPFACHVLLDSFGTYALTGEPITDCAVKQLKVAVFGCMSCNSLDYNLRVYCVDNTPCAFQEVISDERHQGGQLLEEPKLLHFKGNTFSLQVSVLDIPPFLWRIKPFTACQEVPFSRVWSSNRQPLHCAFSLERYTPTTTQLSCKICIRQLKGHEQILQVQTSILESERETITFFAQEDSTFPAQTGPKAFKIPYSIRQRICATFDTPNAKGKDWQMLAQKNSINRNLSYFATQSSPSAVILNLWEARHQQDGDLDSLACALEEIGRTHTKLSNITEPQIDDADFNYSRQNGL.

The N-terminal stretch at 1–30 is a signal peptide; it reads MGTGAADGSRGARRWLPWLGLFFWAAGAAA. Residues 31-382 lie on the Extracellular side of the membrane; the sequence is ARGADGSEIL…SRRGIENASD (352 aa). The region spanning 52–149 is the Ig-like domain; sequence PHFIEEPEDA…LGTSKSRKAS (98 aa). Cystine bridges form between Cys-73-Cys-134, Cys-85-Cys-132, Cys-178-Cys-229, Cys-262-Cys-299, Cys-266-Cys-303, Cys-277-Cys-289, Cys-318-Cys-352, Cys-322-Cys-357, and Cys-330-Cys-342. Residues 89–91 are important for interaction with FLRT2; the sequence is WVH. N-linked (GlcNAc...) asparagine glycosylation is found at Asn-115 and Asn-226. An Ig-like C2-type domain is found at 151–242; sequence RIAYLRKNFE…NIVAKRRSLS (92 aa). 2 consecutive TSP type-1 domains span residues 250 to 304 and 306 to 358; these read NGGW…ALCP and DGSW…GLCI. 2 N-linked (GlcNAc...) asparagine glycosylation sites follow: Asn-351 and Asn-379. The helical transmembrane segment at 383 to 403 threads the bilayer; that stretch reads IALYSGLGAAVVAVAVLVIGV. At 404–956 the chain is on the cytoplasmic side; that stretch reads TLYRRSHSDY…DFNYSRQNGL (553 aa). Positions 545–685 constitute a ZU5 domain; that stretch reads LRTTGVFGHL…FGTYALTGEP (141 aa). The 78-residue stretch at 862-939 folds into the Death domain; that stretch reads QRICATFDTP…RTHTKLSNIT (78 aa).

It belongs to the unc-5 family. As to quaternary structure, interacts (via extracellular domain) with FLRT2 and FLRT3 (via extracellular domain); the interaction is direct. Has higher affinity for FLRT2. Identified in a complex with FLRT3 and ADGRL3; does not interact with ADGRL3 by itself. Post-translationally, proteolytically cleaved by caspases during apoptosis. The cleavage does not take place when the receptor is associated with netrin ligand. Its cleavage by caspases is required to induce apoptosis. Detected in multipolar cells in the brain subventricular zone (at protein level). Detected in embryonic brain neocortex, especially in the subventricular zone. Detected in multipolar cells in the brain subventricular zone. Detected in brain neocortex from young pups, especially in the somatosensory cortex. Expressed in developing limb and mammary gland.

Its subcellular location is the cell membrane. In terms of biological role, receptor for the netrin NTN4 that promotes neuronal cell survival. Plays a role in cell-cell adhesion and cell guidance. Receptor for netrin involved in cell migration. Plays a role in the regulation of neuronal cell migration in the developing brain via its interaction with FLRT2. Plays a role in axon guidance by mediating axon repulsion of neuronal growth cones in the developing nervous system upon ligand binding. May play a role in apoptosis in response to DNA damage. It also acts as a dependence receptor required for apoptosis induction when not associated with netrin ligand. Mediates cell-cell adhesion via its interaction with FLRT3 on an adjacent cell. This Mus musculus (Mouse) protein is Netrin receptor UNC5D (Unc5d).